We begin with the raw amino-acid sequence, 283 residues long: Shikimate dehydrogenase (NADP(+)) (283 aa).

Shikimate contacts are provided by residues 16 to 18 (SLS) and Thr-63. Lys-67 (proton acceptor) is an active-site residue. Asp-79 contacts NADP(+). Asn-88 and Asp-103 together coordinate shikimate. Residues 128 to 132 (GAGGA), Ala-223, and Gly-243 contribute to the NADP(+) site.

Belongs to the shikimate dehydrogenase family. Homodimer.

It carries out the reaction shikimate + NADP(+) = 3-dehydroshikimate + NADPH + H(+). It participates in metabolic intermediate biosynthesis; chorismate biosynthesis; chorismate from D-erythrose 4-phosphate and phosphoenolpyruvate: step 4/7. Involved in the biosynthesis of the chorismate, which leads to the biosynthesis of aromatic amino acids. Catalyzes the reversible NADPH linked reduction of 3-dehydroshikimate (DHSA) to yield shikimate (SA). This is Shikimate dehydrogenase (NADP(+)) from Xanthomonas campestris pv. campestris (strain B100).